A 179-amino-acid chain; its full sequence is ADP-ribose 1''-phosphate phosphatase (179 aa).

A Macro domain is found at 1 to 179 (MIKYIKGDLF…NLHINVYVVD (179 aa)). Substrate-binding positions include 7–9 (GDL), 26–28 (ACN), 33–38 (WGGGIA), and 149–155 (INAGLFA).

This sequence belongs to the POA1 family.

It carries out the reaction ADP-alpha-D-ribose 1''-phosphate + H2O = ADP-D-ribose + phosphate. Functionally, highly specific phosphatase involved in the metabolism of ADP-ribose 1''-phosphate (Appr1p) which is produced as a consequence of tRNA splicing. This Debaryomyces hansenii (strain ATCC 36239 / CBS 767 / BCRC 21394 / JCM 1990 / NBRC 0083 / IGC 2968) (Yeast) protein is ADP-ribose 1''-phosphate phosphatase (POA1).